The sequence spans 54 residues: MAKWVCKICGYIYDEDAGDPDNGISPGTKFEELPDDWVCPICGAPKSEFEKLED.

In terms of domain architecture, Rubredoxin-like spans 2–52 (AKWVCKICGYIYDEDAGDPDNGISPGTKFEELPDDWVCPICGAPKSEFEKL). Positions 6, 9, 39, and 42 each coordinate Fe cation.

It belongs to the rubredoxin family. Fe(3+) serves as cofactor.

Its function is as follows. Rubredoxin is a small nonheme, iron protein lacking acid-labile sulfide. Its single Fe, chelated to 4 Cys, functions as an electron acceptor and may also stabilize the conformation of the molecule. This Pyrococcus furiosus (strain ATCC 43587 / DSM 3638 / JCM 8422 / Vc1) protein is Rubredoxin (rub).